Consider the following 111-residue polypeptide: DNA-binding protein MTH_1615 (111 aa).

It belongs to the PDCD5 family.

DNA-binding protein which can interact with a randomly chosen 20-mer of double-stranded DNA. This Methanothermobacter thermautotrophicus (strain ATCC 29096 / DSM 1053 / JCM 10044 / NBRC 100330 / Delta H) (Methanobacterium thermoautotrophicum) protein is DNA-binding protein MTH_1615.